We begin with the raw amino-acid sequence, 138 residues long: Phospholipase A2 homolog mojave toxin acidic chain (138 aa).

The signal sequence occupies residues 1-40 (MRALWIVAVLLVGVEGSLVEFETLIMKIAGRSGISYYSSY). 7 disulfides stabilise this stretch: Cys42-Cys131, Cys44-Cys60, Cys59-Cys111, Cys65-Cys138, Cys66-Cys104, Cys73-Cys97, and Cys91-Cys102. Residues 81–83 (TYR) constitute a propeptide that is removed on maturation. Residue Gln84 is modified to Pyrrolidone carboxylic acid. Residues 120–126 (DYKYLRF) constitute a propeptide that is removed on maturation.

The protein belongs to the phospholipase A2 family. Group II subfamily. D49 sub-subfamily. As to quaternary structure, heterodimer of an acidic and a basic chain. The acidic subunit is non-toxic, without enzymatic activity and comprises 3 peptides that are cross-linked by 5 disulfide bridges. The basic subunit is toxic, has phospholipase A2 activity and is composed of a single chain. It depends on Ca(2+) as a cofactor. Expressed by the venom gland.

Its subcellular location is the secreted. Functionally, snake venom phospholipase A2 (PLA2) that inhibits neuromuscular transmission by blocking acetylcholine release from the nerve termini. This is Phospholipase A2 homolog mojave toxin acidic chain from Crotalus scutulatus scutulatus (Mojave rattlesnake).